We begin with the raw amino-acid sequence, 211 residues long: Small ribosomal subunit protein uS3 (211 aa).

The KH type-2 domain maps to 38–106; it reads LRNFLKKRLY…EVYLNIQEVR (69 aa).

This sequence belongs to the universal ribosomal protein uS3 family. Part of the 30S ribosomal subunit. Forms a tight complex with proteins S10 and S14.

Functionally, binds the lower part of the 30S subunit head. Binds mRNA in the 70S ribosome, positioning it for translation. The protein is Small ribosomal subunit protein uS3 of Geobacter sp. (strain M21).